Reading from the N-terminus, the 464-residue chain is MTLIYILILAGVSIFSRLLPTYGKGLILVASILVVLPTMTDWEEVGIYYTSDGIADIFILLTAYLLPLSIIANWNNIRSLLYFELILNLGVILLINFMCQDMLSFYVYFEISLAPLFILIGLYGANNRDKAADYILIYTLFSSLFMLLAIGTYEVLIGNTDYQAVSLVVLSTDLQCILFLCISAGIMVKTPLVPVHTWLPVVHSESPLAGSMLLAGVILKLAVYAIIRLIIPTLSDATVLYTPVVYVICAITIIYTSIITLRQTDLKVIVAYSSISHMAVCILGILSNSLAGINGSLILSLAHGFVSPALFIIVGGILYDRYHHRLIYYYQGLLTYMPILAIYLLILSFSNIGTPLTVNFIGELLSLTGAIGRSTILGCISAFSVLLSAAYMLKVTNRLTGGIRTPYTALTSDCTYRESLLMIALIIPTLWYGLYPNGIINMIWQGSKLLYIFVITQYNVIGNI.

13 consecutive transmembrane segments (helical) span residues 18-38 (LLPT…VLPT), 54-74 (IADI…IANW), 79-99 (SLLY…NFMC), 102-122 (MLSF…LIGL), 131-151 (AADY…LAIG), 168-188 (VVLS…GIMV), 207-227 (PLAG…YAII), 239-259 (VLYT…TSII), 266-286 (LKVI…LGIL), 297-317 (LILS…VGGI), 332-352 (GLLT…FSNI), 375-395 (TILG…MLKV), and 420-440 (LLMI…NGII).

The protein belongs to the complex I subunit 4 family.

The protein localises to the mitochondrion membrane. The catalysed reaction is a ubiquinone + NADH + 5 H(+)(in) = a ubiquinol + NAD(+) + 4 H(+)(out). In terms of biological role, core subunit of the mitochondrial membrane respiratory chain NADH dehydrogenase (Complex I) that is believed to belong to the minimal assembly required for catalysis. Complex I functions in the transfer of electrons from NADH to the respiratory chain. The immediate electron acceptor for the enzyme is believed to be ubiquinone. The chain is NADH-ubiquinone oxidoreductase chain 4 (NAD4) from Candida albicans (strain SC5314 / ATCC MYA-2876) (Yeast).